Here is a 96-residue protein sequence, read N- to C-terminus: MSQIMYNYPAMLGHAGDMAGYAGTLQSLGAEIAVEQAALQSAWQGDTGITYQAWQAQWNQAMEDLVRAYHAMSSTHEANTMAMMARDTAEAAKWGG.

The Zn(2+) site is built by H14, H70, H76, and E77.

Belongs to the WXG100 family. ESAT-6 subfamily. In terms of assembly, forms a tight 1:1 complex with EsxG. When it is complexed to EsxG, interacts directly with host HGS/HRS.

Its subcellular location is the secreted. Its function is as follows. EsxH, in complex with EsxG, disrupts ESCRT function and impairs host phagosome maturation, thereby promoting intracellular bacterial growth. The complex acts by interacting, via EsxH, with the host hepatocyte growth factor-regulated tyrosine kinase substrate (HGS/HRS), a component of the ESCRT machinery. The chain is ESAT-6-like protein EsxH from Mycobacterium tuberculosis (strain ATCC 25618 / H37Rv).